The primary structure comprises 103 residues: uncharacterized protein (103 aa).

The disordered stretch occupies residues 1–103 (MAGARRRARC…WRGGSCTSQR (103 aa)). Basic residues-rich tracts occupy residues 55-65 (RRPGPGRRARS) and 74-84 (RPPHSRTRARR).

It belongs to the epstein-barr virus RPMS1 family.

This is an uncharacterized protein from Epstein-Barr virus (strain GD1) (HHV-4).